The sequence spans 440 residues: Phosphatidylcholine-sterol acyltransferase (440 aa).

An N-terminal signal peptide occupies residues 1-24 (MGLPGSPWQWVLLLLGLLLPPATS). Asparagine 44 carries an N-linked (GlcNAc...) asparagine glycan. The cysteines at positions 74 and 98 are disulfide-linked. Asparagine 108 carries an N-linked (GlcNAc...) asparagine glycan. Serine 205 acts as the Nucleophile in catalysis. Residue asparagine 296 is glycosylated (N-linked (GlcNAc...) asparagine). Cysteine 337 and cysteine 380 are oxidised to a cystine. Aspartate 369 serves as the catalytic Charge relay system. A glycan (N-linked (GlcNAc...) asparagine) is linked at asparagine 397. Histidine 401 acts as the Charge relay system in catalysis. A glycan (N-linked (GlcNAc...) asparagine) is linked at asparagine 408.

This sequence belongs to the AB hydrolase superfamily. Lipase family. Detected in blood plasma (at protein level).

Its subcellular location is the secreted. It carries out the reaction a sterol + a 1,2-diacyl-sn-glycero-3-phosphocholine = a sterol ester + a 1-acyl-sn-glycero-3-phosphocholine. It catalyses the reaction a 1-O-alkyl-2-acetyl-sn-glycero-3-phosphocholine + H2O = a 1-O-alkyl-sn-glycero-3-phosphocholine + acetate + H(+). The catalysed reaction is 1-hexadecanoyl-2-(9Z,12Z-octadecadienoyl)-sn-glycero-3-phosphocholine + H2O = (9Z,12Z)-octadecadienoate + 1-hexadecanoyl-sn-glycero-3-phosphocholine + H(+). The enzyme catalyses 1-hexadecanoyl-2-(5Z,8Z,11Z,14Z-eicosatetraenoyl)-sn-glycero-3-phosphocholine + H2O = 1-hexadecanoyl-sn-glycero-3-phosphocholine + (5Z,8Z,11Z,14Z)-eicosatetraenoate + H(+). It carries out the reaction 1-hexadecanoyl-2-(5Z,8Z,11Z,14Z-eicosatetraenoyl)-sn-glycero-3-phosphocholine + cholesterol = cholesteryl (5Z,8Z,11Z,14Z)-eicosatetraenoate + 1-hexadecanoyl-sn-glycero-3-phosphocholine. It catalyses the reaction 1-hexadecanoyl-2-(9Z-octadecenoyl)-sn-glycero-3-phosphocholine + cholesterol = cholesteryl (9Z-octadecenoate) + 1-hexadecanoyl-sn-glycero-3-phosphocholine. The catalysed reaction is a 1-hexadecanoyl-2-acyl-sn-glycero-3-phosphocholine + (24S)-hydroxycholesterol = (24S)-24-hydroxycholesterol ester + 1-hexadecanoyl-sn-glycero-3-phosphocholine. The enzyme catalyses (24S)-hydroxycholesterol + 1-hexadecanoyl-2-(9Z,12Z-octadecadienoyl)-sn-glycero-3-phosphocholine = (24S)-hydroxycholesterol 3-linoleoate + 1-hexadecanoyl-sn-glycero-3-phosphocholine. It carries out the reaction 1-hexadecanoyl-2-(8Z,11Z,14Z-eicosatrienoyl)-sn-glycero-3-phosphocholine + cholesterol = cholesteryl (8Z,11Z,14Z)-eicosatrienoate + 1-hexadecanoyl-sn-glycero-3-phosphocholine. It catalyses the reaction 1-hexadecanoyl-2-(5Z,8Z,11Z-eicosatrienoyl)-sn-glycero-3-phosphocholine + cholesterol = cholesteryl (5Z,8Z,11Z)-eicosatrienoate + 1-hexadecanoyl-sn-glycero-3-phosphocholine. The catalysed reaction is 1-hexadecanoyl-2-(5Z,8Z,11Z,14Z,17Z-eicosapentaenoyl)-sn-glycero-3-phosphocholine + cholesterol = (5Z,8Z,11Z,14Z,17Z-eicosapentaenoyl)-cholesterol + 1-hexadecanoyl-sn-glycero-3-phosphocholine. The enzyme catalyses 1-hexadecanoyl-2-(9Z,12Z-octadecadienoyl)-sn-glycero-3-phosphocholine + cholesterol = cholesteryl (9Z,12Z)-octadecadienoate + 1-hexadecanoyl-sn-glycero-3-phosphocholine. It carries out the reaction 1-hexadecanoyl-2-(6Z,9Z,12Z-octadecatrienoyl)-sn-glycero-3-phosphocholine + cholesterol = (6Z,9Z,12Z-octadecatrienoyl)-cholesterol + 1-hexadecanoyl-sn-glycero-3-phosphocholine. It catalyses the reaction 1-hexadecanoyl-2-(11Z,14Z,17Z-eicosatrienoyl)-sn-glycero-3-phosphocholine + cholesterol = (11Z,14Z,17Z-eicosatrienoyl)-cholesterol + 1-hexadecanoyl-sn-glycero-3-phosphocholine. The catalysed reaction is 1-hexadecanoyl-2-(9Z,12Z,15Z-octadecatrienoyl)-sn-glycero-3-phosphocholine + cholesterol = (9Z,12Z,15Z-octadecatrienoyl)-cholesterol + 1-hexadecanoyl-sn-glycero-3-phosphocholine. The enzyme catalyses a 1-O-alkyl-2-acetyl-sn-glycero-3-phosphocholine + 1-hexadecanoyl-sn-glycero-3-phosphocholine = 1-hexadecanoyl-2-acetyl-sn-glycero-3-phosphocholine + a 1-O-alkyl-sn-glycero-3-phosphocholine. In terms of biological role, central enzyme in the extracellular metabolism of plasma lipoproteins. Synthesized mainly in the liver and secreted into plasma where it converts cholesterol and phosphatidylcholines (lecithins) to cholesteryl esters and lysophosphatidylcholines on the surface of high and low density lipoproteins (HDLs and LDLs). The cholesterol ester is then transported back to the liver. Also produced in the brain by primary astrocytes, and esterifies free cholesterol on nascent APOE-containing lipoproteins secreted from glia and influences cerebral spinal fluid (CSF) APOE- and APOA1 levels. Together with APOE and the cholesterol transporter ABCA1, plays a key role in the maturation of glial-derived, nascent lipoproteins. Required for remodeling high-density lipoprotein particles into their spherical forms. Has a preference for plasma 16:0-18:2 or 18:O-18:2 phosphatidylcholines. Catalyzes the hydrolysis of 1-O-alkyl-2-acetyl-sn-glycero-3-phosphocholine (platelet-activating factor or PAF) to 1-O-alkyl-sn-glycero-3-phosphocholine (lyso-PAF). Also catalyzes the transfer of the acetate group from PAF to 1-hexadecanoyl-sn-glycero-3-phosphocholine forming lyso-PAF. Catalyzes the esterification of (24S)-hydroxycholesterol (24(S)OH-C), also known as cerebrosterol to produce 24(S)OH-C monoesters. The protein is Phosphatidylcholine-sterol acyltransferase (Lcat) of Rattus norvegicus (Rat).